Reading from the N-terminus, the 363-residue chain is Histidinol-phosphate aminotransferase (363 aa).

Lys218 carries the N6-(pyridoxal phosphate)lysine modification.

The protein belongs to the class-II pyridoxal-phosphate-dependent aminotransferase family. Histidinol-phosphate aminotransferase subfamily. Homodimer. Pyridoxal 5'-phosphate serves as cofactor.

The catalysed reaction is L-histidinol phosphate + 2-oxoglutarate = 3-(imidazol-4-yl)-2-oxopropyl phosphate + L-glutamate. It participates in amino-acid biosynthesis; L-histidine biosynthesis; L-histidine from 5-phospho-alpha-D-ribose 1-diphosphate: step 7/9. The sequence is that of Histidinol-phosphate aminotransferase from Xanthomonas euvesicatoria pv. vesicatoria (strain 85-10) (Xanthomonas campestris pv. vesicatoria).